The following is a 1502-amino-acid chain: G patch domain-containing protein 8 (1502 aa).

One can recognise a G-patch domain in the interval 40–86 (SDNIGHRLLQKHGWKLGQGLGKSLQGRTDPIPIVVKYDVMGMGRMEM). A coiled-coil region spans residues 89-124 (DYAEDATERRRVLEVEKEDTEELRQKYKDYVDKEKA). A C2H2-type zinc finger spans residues 136 to 160 (FYCELCDKQYQKHQEFDNHINSYDH). Residues 172–251 (REFARNVSSR…GATASCGLGS (80 aa)) form a disordered region. Positions 182 to 206 (SRKDEKKQEKALRRLHELAEQRKQA) are enriched in basic and acidic residues. A compositionally biased stretch (acidic residues) spans 223–233 (VDEEGGEDDKD). Residue lysine 311 forms a Glycyl lysine isopeptide (Lys-Gly) (interchain with G-Cter in SUMO2) linkage. Composition is skewed to basic and acidic residues over residues 323–339 (AEEG…EKSS) and 424–436 (NTTH…ESKK). 2 disordered regions span residues 323-391 (AEEG…ATEP) and 419-541 (QMDG…FPVL). The span at 459–472 (SEVSEQPKETSMTE) shows a compositional bias: polar residues. Residue lysine 479 is modified to N6-acetyllysine. Residue serine 491 is modified to Phosphoserine. The segment covering 491–519 (SDQSLESHSQKVSETQMCESNSSKETSLA) has biased composition (polar residues). Residue lysine 577 forms a Glycyl lysine isopeptide (Lys-Gly) (interchain with G-Cter in SUMO2) linkage. Basic and acidic residues-rich tracts occupy residues 579 to 623 (SRNK…EKIV) and 653 to 670 (SETE…ERSG). Positions 579-1301 (SRNKDARTKG…ESTDGAEDAS (723 aa)) are disordered. A Phosphoserine modification is found at serine 653. Basic residues predominate over residues 671–692 (KSHRHKKKKKHKKSSKHKRKHK). Basic and acidic residues predominate over residues 693–707 (ADTEEKSSKAESGEK). Over residues 708-720 (SKKRKKRKRKKNK) the composition is skewed to basic residues. A compositionally biased stretch (pro residues) spans 733–743 (PEPPGSGSPAP). 3 positions are modified to phosphoserine: serine 738, serine 740, and serine 758. The segment covering 750 to 772 (AQDDSQRRSLPAEEGSSGKKDEG) has biased composition (basic and acidic residues). Composition is skewed to basic residues over residues 799–809 (AGTKRSSRSSH) and 852–867 (SRSR…RSSR). Residues 868–896 (RSYSSSSDASSDQSCYSRQRSYSDDSYSD) show a composition bias toward low complexity. Phosphoserine is present on residues serine 911 and serine 914. Residues 919–928 (SKHRSKRHKY) show a composition bias toward basic residues. Phosphoserine occurs at positions 981, 1009, 1014, 1033, and 1035. The span at 1010–1027 (WGHESPEERHSGRRDFIR) shows a compositional bias: basic and acidic residues. The span at 1042-1059 (GRGEGPGKKDDGRGDDSK) shows a compositional bias: basic and acidic residues. A Phosphoserine modification is found at serine 1081. Composition is skewed to basic and acidic residues over residues 1093-1108 (LLEK…KPSV) and 1159-1171 (KKCE…RGEE). A Glycyl lysine isopeptide (Lys-Gly) (interchain with G-Cter in SUMO2) cross-link involves residue lysine 1105. A Phosphoserine modification is found at serine 1107. Serine 1175 carries the phosphoserine modification.

The polypeptide is G patch domain-containing protein 8 (GPATCH8) (Homo sapiens (Human)).